The primary structure comprises 221 residues: Glutathione peroxidase 6 (221 aa).

Residues 1 to 19 (MFQQFQASCLVLFFLVGFA) form the signal peptide. The active site involves selenocysteine 73. Selenocysteine 73 is a non-standard amino acid (selenocysteine).

The protein belongs to the glutathione peroxidase family. In terms of tissue distribution, expressed in olfactory epithelium and embryos.

It localises to the secreted. The enzyme catalyses 2 glutathione + H2O2 = glutathione disulfide + 2 H2O. The protein is Glutathione peroxidase 6 (GPX6) of Homo sapiens (Human).